We begin with the raw amino-acid sequence, 489 residues long: Ecdysteroid UDP-glucosyltransferase (489 aa).

Residues 1–17 (MVFLIIALTLLATGARA) form the signal peptide.

The protein belongs to the UDP-glycosyltransferase family.

In terms of biological role, catalyzes the transfer of glucose from UDP-glucose to ecdysteroids which are insect molting hormones. Expression of egt interferes with normal insect development and block molting. This chain is Ecdysteroid UDP-glucosyltransferase (EGT), found in Orgyia pseudotsugata (Douglas-fir tussock moth).